Here is a 305-residue protein sequence, read N- to C-terminus: UDP-3-O-acyl-N-acetylglucosamine deacetylase (305 aa).

Zn(2+) is bound by residues His-79, His-238, and Asp-242. Residue His-265 is the Proton donor of the active site.

It belongs to the LpxC family. The cofactor is Zn(2+).

The catalysed reaction is a UDP-3-O-[(3R)-3-hydroxyacyl]-N-acetyl-alpha-D-glucosamine + H2O = a UDP-3-O-[(3R)-3-hydroxyacyl]-alpha-D-glucosamine + acetate. It functions in the pathway glycolipid biosynthesis; lipid IV(A) biosynthesis; lipid IV(A) from (3R)-3-hydroxytetradecanoyl-[acyl-carrier-protein] and UDP-N-acetyl-alpha-D-glucosamine: step 2/6. In terms of biological role, catalyzes the hydrolysis of UDP-3-O-myristoyl-N-acetylglucosamine to form UDP-3-O-myristoylglucosamine and acetate, the committed step in lipid A biosynthesis. This Vibrio atlanticus (strain LGP32) (Vibrio splendidus (strain Mel32)) protein is UDP-3-O-acyl-N-acetylglucosamine deacetylase.